The following is a 350-amino-acid chain: Biotin synthase (350 aa).

The span at 1-13 (MVTQAATRPSNDA) shows a compositional bias: polar residues. The segment at 1–20 (MVTQAATRPSNDAGQDGVTE) is disordered. The Radical SAM core domain occupies 71–296 (PEVEVEGIIS…RTMLRFAGGR (226 aa)). [4Fe-4S] cluster is bound by residues C86, C90, and C93. [2Fe-2S] cluster is bound by residues C129, C162, C221, and R291.

Belongs to the radical SAM superfamily. Biotin synthase family. As to quaternary structure, homodimer. [4Fe-4S] cluster serves as cofactor. Requires [2Fe-2S] cluster as cofactor.

The catalysed reaction is (4R,5S)-dethiobiotin + (sulfur carrier)-SH + 2 reduced [2Fe-2S]-[ferredoxin] + 2 S-adenosyl-L-methionine = (sulfur carrier)-H + biotin + 2 5'-deoxyadenosine + 2 L-methionine + 2 oxidized [2Fe-2S]-[ferredoxin]. It functions in the pathway cofactor biosynthesis; biotin biosynthesis; biotin from 7,8-diaminononanoate: step 2/2. In terms of biological role, catalyzes the conversion of dethiobiotin (DTB) to biotin by the insertion of a sulfur atom into dethiobiotin via a radical-based mechanism. The protein is Biotin synthase of Mycobacterium ulcerans (strain Agy99).